The chain runs to 587 residues: Serine/threonine-protein phosphatase 2A 65 kDa regulatory subunit A beta isoform (587 aa).

An N-acetylserine modification is found at serine 2. 14 HEAT repeats span residues 2–42 (SMID…ALGE), 44–80 (RTRK…YVGG), 81–119 (VEYA…QMRE), 158–196 (DMLK…TVES), 197–235 (AHLK…LLEP), 236–274 (QDCV…AVGP), 275–313 (EPTR…ILNP), 315–352 (IAIQ…VLGK), 353–391 (DATI…VIGI), 393–430 (LLSQ…QLGV), 432–469 (FFDD…EFGP), 470–508 (EWAM…VMGS), 509–547 (EITC…IVDQ), and 549–586 (VVEK…VMMS).

Belongs to the phosphatase 2A regulatory subunit A family. In terms of assembly, PP2A consists of a common heterodimeric core enzyme, composed of a 36 kDa catalytic subunit (subunit C) and a 65 kDa constant regulatory subunit (subunit A), that associates with a variety of regulatory subunits such as subunits B (the R2/B/PR55/B55, R3/B''/PR72/PR130/PR59 and R5/B'/B56 families). Interacts with B'THETA. Interacts with SRK2E/OST1. Interacts with SIC/RON3. As to expression, ubiquitous, with higher levels in roots and flowers (at protein level).

Its subcellular location is the cytoplasm. It localises to the cytosol. The protein localises to the nucleus. The protein resides in the peroxisome. Functionally, the A subunit of protein phosphatase 2A serves as a scaffolding molecule to coordinate the assembly of the catalytic subunit and a variable regulatory B subunit. Involved during developmental process such as seedling and floral developments. Seems to act as a negative regulator of PP2A catalytic activity. Associates with the serine/threonine-protein phosphatase PP2A catalytic subunit C and regulatory subunit B' to positively regulates beta-oxidation of fatty acids and protoauxins in peroxisomes by dephosphorylating peroxisomal beta-oxidation-related proteins. The protein is Serine/threonine-protein phosphatase 2A 65 kDa regulatory subunit A beta isoform (PP2AA2) of Arabidopsis thaliana (Mouse-ear cress).